A 355-amino-acid polypeptide reads, in one-letter code: Phosphate acyltransferase (355 aa).

Belongs to the PlsX family. Homodimer. Probably interacts with PlsY.

The protein localises to the cytoplasm. It carries out the reaction a fatty acyl-[ACP] + phosphate = an acyl phosphate + holo-[ACP]. Its pathway is lipid metabolism; phospholipid metabolism. Functionally, catalyzes the reversible formation of acyl-phosphate (acyl-PO(4)) from acyl-[acyl-carrier-protein] (acyl-ACP). This enzyme utilizes acyl-ACP as fatty acyl donor, but not acyl-CoA. The protein is Phosphate acyltransferase of Erythrobacter litoralis (strain HTCC2594).